A 187-amino-acid polypeptide reads, in one-letter code: CASP-like protein 3A2 (187 aa).

Over 1 to 24 (MTSNGEGGEVVAKRRRKGIKELVQ) the chain is Cytoplasmic. Residues 25 to 45 (VALRGGCLAASATAMAVMLTA) form a helical membrane-spanning segment. Over 46–71 (TEEGVADIYGFKLTLSSNWSFSPSYQ) the chain is Extracellular. An N-linked (GlcNAc...) asparagine glycan is attached at N63. Residues 72–92 (YVVGACAGTVLYSLLQLCLGV) form a helical membrane-spanning segment. Residues 93 to 107 (YRLVTGSPITPSRFQ) lie on the Cytoplasmic side of the membrane. The chain crosses the membrane as a helical span at residues 108–128 (AWLCFTSDQLFCYLMMSAGSA). Over 129–162 (GSGVTNLNKTGIRHTPLPDFCKTLSSFCNHVALS) the chain is Extracellular. N136 is a glycosylation site (N-linked (GlcNAc...) asparagine). Residues 163-183 (LLLVFLSFIFLASSSFFTVLV) form a helical membrane-spanning segment. Residues 184 to 187 (LSTP) are Cytoplasmic-facing.

Belongs to the Casparian strip membrane proteins (CASP) family. As to quaternary structure, homodimer and heterodimers.

Its subcellular location is the cell membrane. In Arabidopsis thaliana (Mouse-ear cress), this protein is CASP-like protein 3A2.